A 326-amino-acid polypeptide reads, in one-letter code: Beta-ketoacyl-[acyl-carrier-protein] synthase III 2 (326 aa).

Active-site residues include cysteine 114 and histidine 251. The interval serine 252–arginine 256 is ACP-binding. The active site involves asparagine 281.

The protein belongs to the thiolase-like superfamily. FabH family. As to quaternary structure, homodimer.

It is found in the cytoplasm. It catalyses the reaction malonyl-[ACP] + acetyl-CoA + H(+) = 3-oxobutanoyl-[ACP] + CO2 + CoA. It participates in lipid metabolism; fatty acid biosynthesis. Catalyzes the condensation reaction of fatty acid synthesis by the addition to an acyl acceptor of two carbons from malonyl-ACP. Catalyzes the first condensation reaction which initiates fatty acid synthesis and may therefore play a role in governing the total rate of fatty acid production. Possesses both acetoacetyl-ACP synthase and acetyl transacylase activities. Its substrate specificity determines the biosynthesis of branched-chain and/or straight-chain of fatty acids. This is Beta-ketoacyl-[acyl-carrier-protein] synthase III 2 from Staphylococcus epidermidis (strain ATCC 12228 / FDA PCI 1200).